We begin with the raw amino-acid sequence, 464 residues long: Anthranilate synthase component 1 (464 aa).

L-tryptophan-binding positions include Ser-41 and 236–238 (PYM). Chorismate is bound at residue 271–272 (GT). Glu-298 contributes to the Mg(2+) binding site. Chorismate is bound by residues Tyr-386, Arg-406, 420–422 (GAG), and Gly-422. Residue Glu-435 coordinates Mg(2+).

Belongs to the anthranilate synthase component I family. Heterotetramer consisting of two non-identical subunits: a beta subunit (TrpG) and a large alpha subunit (TrpE). Mg(2+) is required as a cofactor.

It catalyses the reaction chorismate + L-glutamine = anthranilate + pyruvate + L-glutamate + H(+). The protein operates within amino-acid biosynthesis; L-tryptophan biosynthesis; L-tryptophan from chorismate: step 1/5. Its activity is regulated as follows. Feedback inhibited by tryptophan. Functionally, part of a heterotetrameric complex that catalyzes the two-step biosynthesis of anthranilate, an intermediate in the biosynthesis of L-tryptophan. In the first step, the glutamine-binding beta subunit (TrpG) of anthranilate synthase (AS) provides the glutamine amidotransferase activity which generates ammonia as a substrate that, along with chorismate, is used in the second step, catalyzed by the large alpha subunit of AS (TrpE) to produce anthranilate. In the absence of TrpG, TrpE can synthesize anthranilate directly from chorismate and high concentrations of ammonia. The protein is Anthranilate synthase component 1 (trpE) of Methanothermobacter thermautotrophicus (strain ATCC 29096 / DSM 1053 / JCM 10044 / NBRC 100330 / Delta H) (Methanobacterium thermoautotrophicum).